A 225-amino-acid polypeptide reads, in one-letter code: Uracil-DNA glycosylase (225 aa).

Asp65 acts as the Proton acceptor in catalysis.

Belongs to the uracil-DNA glycosylase (UDG) superfamily. UNG family.

The protein resides in the cytoplasm. The catalysed reaction is Hydrolyzes single-stranded DNA or mismatched double-stranded DNA and polynucleotides, releasing free uracil.. Functionally, excises uracil residues from the DNA which can arise as a result of misincorporation of dUMP residues by DNA polymerase or due to deamination of cytosine. The chain is Uracil-DNA glycosylase from Clostridium beijerinckii (strain ATCC 51743 / NCIMB 8052) (Clostridium acetobutylicum).